Reading from the N-terminus, the 462-residue chain is Chromosomal replication initiator protein DnaA (462 aa).

Positions 1 to 84 (MAVSLWQQCI…RFDIGSRPSA (84 aa)) are domain I, interacts with DnaA modulators. Positions 84–125 (APRPVQATAAVERPKFEQNTKPAKTSFNVNSPEPAMAANHRS) are domain II. Residues 126–342 (NINRTYQFEN…GALNRVIANA (217 aa)) form a domain III, AAA+ region region. Positions 170, 172, 173, and 174 each coordinate ATP. Residues 343-462 (NFTGRPITID…YANLIRTLSS (120 aa)) form a domain IV, binds dsDNA region.

It belongs to the DnaA family. Oligomerizes as a right-handed, spiral filament on DNA at oriC.

The protein localises to the cytoplasm. Its function is as follows. Plays an essential role in the initiation and regulation of chromosomal replication. ATP-DnaA binds to the origin of replication (oriC) to initiate formation of the DNA replication initiation complex once per cell cycle. Binds the DnaA box (a 9 base pair repeat at the origin) and separates the double-stranded (ds)DNA. Forms a right-handed helical filament on oriC DNA; dsDNA binds to the exterior of the filament while single-stranded (ss)DNA is stabiized in the filament's interior. The ATP-DnaA-oriC complex binds and stabilizes one strand of the AT-rich DNA unwinding element (DUE), permitting loading of DNA polymerase. After initiation quickly degrades to an ADP-DnaA complex that is not apt for DNA replication. Binds acidic phospholipids. The sequence is that of Chromosomal replication initiator protein DnaA from Shewanella sediminis (strain HAW-EB3).